A 569-amino-acid chain; its full sequence is Mitochondrial import receptor subunit tomm-70 (569 aa).

The Mitochondrial intermembrane segment spans residues 1–12 (MVETTGISDQTK). Residues 13–32 (KVLIGVAAAATVAGVGYLVY) form a helical membrane-spanning segment. Over 33-569 (KSFGGSDLER…KRAAEMLDMY (537 aa)) the chain is Cytoplasmic. 4 TPR repeats span residues 44–77 (LEEI…AGPN), 119–152 (TKAY…DSSL), 221–254 (DQKQ…PPAM), and 510–544 (LHLL…APPR).

Belongs to the Tom70 family. As to quaternary structure, forms part of the preprotein translocase complex of the outer mitochondrial membrane (TOM complex). In terms of tissue distribution, expressed in body wall muscle cells, the pharynx and structures in the tail.

It is found in the mitochondrion outer membrane. Functionally, receptor that accelerates the import of all mitochondrial precursor proteins. The sequence is that of Mitochondrial import receptor subunit tomm-70 from Caenorhabditis elegans.